Consider the following 234-residue polypeptide: Large ribosomal subunit protein uL1c (234 aa).

It belongs to the universal ribosomal protein uL1 family. In terms of assembly, part of the 50S ribosomal subunit.

It is found in the plastid. The protein resides in the chloroplast. Binds directly to 23S rRNA. Might be involved in E site tRNA release (Potential). The sequence is that of Large ribosomal subunit protein uL1c (rpl1) from Guillardia theta (Cryptophyte).